Consider the following 75-residue polypeptide: Probable protein BRICK1-B (75 aa).

Positions 41 to 72 (MSCRSRLATLNEKLTTLERRIEYIEARVTKGE) form a coiled coil.

It belongs to the BRK1 family.

Its subcellular location is the cytoplasm. It localises to the cytoskeleton. Functionally, involved in regulation of actin and microtubule organization. Part of a WAVE complex that activates the Arp2/3 complex. This is Probable protein BRICK1-B (brk1-b) from Xenopus laevis (African clawed frog).